We begin with the raw amino-acid sequence, 504 residues long: Maturase K (504 aa).

This sequence belongs to the intron maturase 2 family. MatK subfamily.

It is found in the plastid. The protein resides in the chloroplast. In terms of biological role, usually encoded in the trnK tRNA gene intron. Probably assists in splicing its own and other chloroplast group II introns. The chain is Maturase K from Arabidopsis lyrata (Lyre-leaved rock-cress).